Consider the following 263-residue polypeptide: Heat-labile enterotoxin IIB, A chain (263 aa).

The signal sequence occupies residues 1 to 20; it reads MAKVISFFISLFLISFPLYA. An NAD(+)-binding site is contributed by 26 to 39; sequence ADSRTPDEVRRSGG. Glu-130 is a catalytic residue. A disulfide bridge connects residues Cys-205 and Cys-217.

The protein belongs to the enterotoxin A family. Heterohexamer of one A chain and of five B chains.

Functionally, the biological activity of the toxin is produced by the A chain, which activates intracellular adenyl cyclase. The polypeptide is Heat-labile enterotoxin IIB, A chain (Escherichia coli).